The following is a 297-amino-acid chain: Phosphatidylserine decarboxylase proenzyme (297 aa).

Residues aspartate 90, histidine 147, and serine 252 each act as charge relay system; for autoendoproteolytic cleavage activity in the active site. The active-site Schiff-base intermediate with substrate; via pyruvic acid; for decarboxylase activity is the serine 252. Serine 252 bears the Pyruvic acid (Ser); by autocatalysis mark.

It belongs to the phosphatidylserine decarboxylase family. PSD-B subfamily. Prokaryotic type I sub-subfamily. In terms of assembly, heterodimer of a large membrane-associated beta subunit and a small pyruvoyl-containing alpha subunit. Requires pyruvate as cofactor. Post-translationally, is synthesized initially as an inactive proenzyme. Formation of the active enzyme involves a self-maturation process in which the active site pyruvoyl group is generated from an internal serine residue via an autocatalytic post-translational modification. Two non-identical subunits are generated from the proenzyme in this reaction, and the pyruvate is formed at the N-terminus of the alpha chain, which is derived from the carboxyl end of the proenzyme. The autoendoproteolytic cleavage occurs by a canonical serine protease mechanism, in which the side chain hydroxyl group of the serine supplies its oxygen atom to form the C-terminus of the beta chain, while the remainder of the serine residue undergoes an oxidative deamination to produce ammonia and the pyruvoyl prosthetic group on the alpha chain. During this reaction, the Ser that is part of the protease active site of the proenzyme becomes the pyruvoyl prosthetic group, which constitutes an essential element of the active site of the mature decarboxylase.

The protein resides in the cell membrane. It catalyses the reaction a 1,2-diacyl-sn-glycero-3-phospho-L-serine + H(+) = a 1,2-diacyl-sn-glycero-3-phosphoethanolamine + CO2. The protein operates within phospholipid metabolism; phosphatidylethanolamine biosynthesis; phosphatidylethanolamine from CDP-diacylglycerol: step 2/2. In terms of biological role, catalyzes the formation of phosphatidylethanolamine (PtdEtn) from phosphatidylserine (PtdSer). In Stutzerimonas stutzeri (strain A1501) (Pseudomonas stutzeri), this protein is Phosphatidylserine decarboxylase proenzyme.